The primary structure comprises 281 residues: Very-long-chain (3R)-3-hydroxyacyl-CoA dehydratase 1 (281 aa).

At 1 to 68 (MGKGDWRQGR…RRLGLLATAW (68 aa)) the chain is on the cytoplasmic side. The chain crosses the membrane as a helical span at residues 69–88 (LTFYNIAMTAGWLVLAIAMV). Residues 89-107 (RFYMEKGTHRGLYKSIQKT) are Lumenal-facing. Residues 108–124 (LKFFQTFALLEVVHCLI) form a helical membrane-spanning segment. Residues 125–134 (GIVPTSVLVT) lie on the Cytoplasmic side of the membrane. A helical membrane pass occupies residues 135–152 (GVQVSSRIFMVWLITHSI). Residues 153 to 158 (KPIQNE) are Lumenal-facing. Residues 159 to 173 (ESVVLFLVSWTVTEI) traverse the membrane as a helical segment. At 174 to 196 (TRYSFYTFSLLDHLPHFIKWARY) the chain is on the cytoplasmic side. Residues 197 to 214 (NLFIILYPVGVAGELLTI) form a helical membrane-spanning segment. Catalysis depends on residues Tyr-203 and Glu-210. The Lumenal segment spans residues 215–244 (YAALPYVKKSGMFSVRLPNKYNVSFDYYYF). Asn-236 carries N-linked (GlcNAc...) asparagine glycosylation. A helical transmembrane segment spans residues 245–262 (LLITMASYIPLFPQLYFH). At 263–281 (MLRQRRKVLHGEVIAEKDD) the chain is on the cytoplasmic side.

The protein belongs to the very long-chain fatty acids dehydratase HACD family. As to quaternary structure, may interact with enzymes of the ELO family (including ELOVL1); with those enzymes that mediate condensation, the first of the four steps of the reaction cycle responsible for fatty acids elongation, may be part of a larger fatty acids elongase complex. Interacts with TECR. In terms of processing, N-glycosylated. As to expression, expressed at high levels in heart, skeletal muscle and testis, weak expression in kidney and liver.

Its subcellular location is the endoplasmic reticulum membrane. It catalyses the reaction a very-long-chain (3R)-3-hydroxyacyl-CoA = a very-long-chain (2E)-enoyl-CoA + H2O. It carries out the reaction (3R)-hydroxyhexadecanoyl-CoA = (2E)-hexadecenoyl-CoA + H2O. The enzyme catalyses (3R)-hydroxyoctadecanoyl-CoA = (2E)-octadecenoyl-CoA + H2O. The catalysed reaction is (3R)-hydroxyeicosanoyl-CoA = (2E)-eicosenoyl-CoA + H2O. It catalyses the reaction (3R)-hydroxydocosanoyl-CoA = (2E)-docosenoyl-CoA + H2O. It carries out the reaction (3R)-hydroxytetracosanoyl-CoA = (2E)-tetracosenoyl-CoA + H2O. The enzyme catalyses (3R)-hydroxyhexacosanoyl-CoA = (2E)-hexacosenoyl-CoA + H2O. It participates in lipid metabolism; fatty acid biosynthesis. The protein is Very-long-chain (3R)-3-hydroxyacyl-CoA dehydratase 1 of Mus musculus (Mouse).